A 100-amino-acid polypeptide reads, in one-letter code: MLEGFWVLEIRVTTKARENKVVSLEDGILRVRVTEAPERGKANDAVVALLAKFLSIPKNDVTLIAGEASRRKKVLLPRAIKAFLFEQFPQTSSPDAGKKC.

This sequence belongs to the UPF0235 family.

The chain is UPF0235 protein TC_0667 from Chlamydia muridarum (strain MoPn / Nigg).